The following is a 336-amino-acid chain: Probable allantoicase (336 aa).

Belongs to the allantoicase family.

It carries out the reaction allantoate + H2O = (S)-ureidoglycolate + urea. The protein operates within nitrogen metabolism; (S)-allantoin degradation; (S)-ureidoglycolate from allantoate (aminidohydrolase route): step 1/1. This chain is Probable allantoicase, found in Acinetobacter baumannii (strain SDF).